Here is a 397-residue protein sequence, read N- to C-terminus: GDNF family receptor alpha-3 (397 aa).

A signal peptide spans M1–G28. A disulfide bridge links C48 with C54. Residues N92 and N145 are each glycosylated (N-linked (GlcNAc...) asparagine). 10 cysteine pairs are disulfide-bonded: C159/C215, C166/C172, C183/C193, C188/C236, C217/C224, C245/C313, C252/C258, C269/C285, C278/C337, and C315/C325. N306 carries N-linked (GlcNAc...) asparagine glycosylation. The GPI-anchor amidated asparagine moiety is linked to residue N371. A propeptide spans P372–W397 (removed in mature form).

This sequence belongs to the GDNFR family. As to quaternary structure, interacts with ARTN ligand and RET: forms a 2:2:2 ternary complex composed of ARTN ligand, GFRA3 and RET receptor. Interacts with SORL1.

The protein resides in the cell membrane. Its function is as follows. Receptor for artemin (ARTN), a growth factor that supports the survival of sensory and sympathetic peripheral neurons. ARTN-binding leads to autophosphorylation and activation of the RET receptor. This is GDNF family receptor alpha-3 (Gfra3) from Mus musculus (Mouse).